A 138-amino-acid chain; its full sequence is Ribosome-binding factor A (138 aa).

The span at 1–20 shows a compositional bias: low complexity; sequence MSSRPPSSSGPAGIPKGAPS. Residues 1–21 are disordered; it reads MSSRPPSSSGPAGIPKGAPSQ.

This sequence belongs to the RbfA family. Monomer. Binds 30S ribosomal subunits, but not 50S ribosomal subunits or 70S ribosomes.

It localises to the cytoplasm. Functionally, one of several proteins that assist in the late maturation steps of the functional core of the 30S ribosomal subunit. Associates with free 30S ribosomal subunits (but not with 30S subunits that are part of 70S ribosomes or polysomes). Required for efficient processing of 16S rRNA. May interact with the 5'-terminal helix region of 16S rRNA. The protein is Ribosome-binding factor A of Granulibacter bethesdensis (strain ATCC BAA-1260 / CGDNIH1).